The chain runs to 185 residues: GTP cyclohydrolase 1 (185 aa).

3 residues coordinate Zn(2+): Cys-75, His-78, and Cys-146.

This sequence belongs to the GTP cyclohydrolase I family. Toroid-shaped homodecamer, composed of two pentamers of five dimers.

It catalyses the reaction GTP + H2O = 7,8-dihydroneopterin 3'-triphosphate + formate + H(+). The protein operates within cofactor biosynthesis; 7,8-dihydroneopterin triphosphate biosynthesis; 7,8-dihydroneopterin triphosphate from GTP: step 1/1. This Methylococcus capsulatus (strain ATCC 33009 / NCIMB 11132 / Bath) protein is GTP cyclohydrolase 1.